We begin with the raw amino-acid sequence, 445 residues long: Inward rectifier potassium channel 4 (445 aa).

Residues 1–55 lie on the Cytoplasmic side of the membrane; it reads MHGHNRNGQAHVPRRKRRNRFVKKNGQCNVYFANLSNKSQRYMADIFTTCVDTRW. A helical membrane pass occupies residues 56–80; the sequence is RYMLMIFSAAFLVSWLFFGLLFWWI. The Extracellular segment spans residues 81 to 119; the sequence is AFFHGDLEASPSVPAVGGPGGNGGESPNAPKPCIMHVNG. Positions 120–131 form an intramembrane region, helical; Pore-forming; that stretch reads FLGAFLFSVETQ. The pore-forming intramembrane region spans 132–138; sequence TTIGYGF. The Selectivity filter motif lies at 133–138; that stretch reads TIGYGF. At 139–147 the chain is on the extracellular side; the sequence is RCVTEECPL. A helical transmembrane segment spans residues 148-169; the sequence is AVIAVVVQSIVGCVIDSFMIGT. The Cytoplasmic segment spans residues 170–445; it reads IMAKMARPKK…NISYRRESRI (276 aa). The PDZ-binding motif lies at 443–445; it reads SRI.

Belongs to the inward rectifier-type potassium channel (TC 1.A.2.1) family. KCNJ4 subfamily. As to quaternary structure, homomultimeric and heteromultimeric association with KCNJ2 and KCNJ12. Interacts with DLG2 and DLG4. Associates, via its PDZ-recognition domain, with a complex containing LIN7A, LIN7B, LIN7C, DLG1, CASK and APBA1. Interacts with TAX1BP3. TAX1BP3 competes with LIN7 family members for KCNJ4 binding. As to expression, highly expressed in the forebrain, moderately in skeletal muscle. Im olfactory bulb, specifically expressed at the postsynaptic membrane of dendritic spines of granule cells.

It is found in the cell membrane. The protein resides in the postsynaptic cell membrane. It localises to the cytoplasmic vesicle membrane. The enzyme catalyses K(+)(in) = K(+)(out). In terms of biological role, inward rectifier potassium channels are characterized by a greater tendency to allow potassium to flow into the cell rather than out of it. Their voltage dependence is regulated by the concentration of extracellular potassium; as external potassium is raised, the voltage range of the channel opening shifts to more positive voltages. The inward rectification is mainly due to the blockage of outward current by internal magnesium. Can be blocked by extracellular barium and cesium. In Mus musculus (Mouse), this protein is Inward rectifier potassium channel 4 (Kcnj4).